A 205-amino-acid chain; its full sequence is MADDEVIRKRLLIDGEGVGDDRRITTLMKTFVKWCNSTDDDNDASYQKLLAQLAQCEFAMGKTEMVHAMNERETENYEKAYKEVEQSITHAYEEIATCKTNLQEAKRIRRNKQEYDALAKEITKHPERQETTRQISELEKDLNSLTETKESLVSKLELRKKQFYLLINTIHELQRMIDDEKTDEGTALSPQQSITSPGKVALMDT.

Residues 68-158 adopt a coiled-coil conformation; sequence AMNERETENY…KESLVSKLEL (91 aa). Positions 181 to 205 are disordered; it reads KTDEGTALSPQQSITSPGKVALMDT.

Belongs to the THOC7 family. As to quaternary structure, component of the THO subcomplex of the transcription/export (TREX) complex which seems to have a dynamic structure involving ATP-dependent remodeling.

The protein localises to the cytoplasm. It is found in the nucleus. It localises to the nucleus speckle. In terms of biological role, may act as component of the THO subcomplex of the TREX complex which is thought to couple mRNA transcription, processing and nuclear export, and which specifically associates with spliced mRNA and not with unspliced pre-mRNA. This chain is THO complex subunit 7 homolog (thoc7), found in Nematostella vectensis (Starlet sea anemone).